Consider the following 292-residue polypeptide: Elongation factor Ts (292 aa).

The interval 80-83 (TDSV) is involved in Mg(2+) ion dislocation from EF-Tu.

This sequence belongs to the EF-Ts family.

The protein resides in the cytoplasm. Associates with the EF-Tu.GDP complex and induces the exchange of GDP to GTP. It remains bound to the aminoacyl-tRNA.EF-Tu.GTP complex up to the GTP hydrolysis stage on the ribosome. This chain is Elongation factor Ts, found in Lactiplantibacillus plantarum (strain ATCC BAA-793 / NCIMB 8826 / WCFS1) (Lactobacillus plantarum).